Consider the following 240-residue polypeptide: Large ribosomal subunit protein bL25 (240 aa).

Residues 1-23 are disordered; it reads MATVKELKATARPKAGKGAARAE. Residues 10–19 show a composition bias toward low complexity; the sequence is TARPKAGKGA.

It belongs to the bacterial ribosomal protein bL25 family. CTC subfamily. Part of the 50S ribosomal subunit; part of the 5S rRNA/L5/L18/L25 subcomplex. Contacts the 5S rRNA. Binds to the 5S rRNA independently of L5 and L18.

Functionally, this is one of the proteins that binds to the 5S RNA in the ribosome where it forms part of the central protuberance. The chain is Large ribosomal subunit protein bL25 from Afipia carboxidovorans (strain ATCC 49405 / DSM 1227 / KCTC 32145 / OM5) (Oligotropha carboxidovorans).